Reading from the N-terminus, the 221-residue chain is CDC5 pindle pole body anchor protein 1 (221 aa).

The segment at 142–221 (KNIERDNLKP…PTEDSVPHAE (80 aa)) is disordered. Phosphoserine is present on residues Ser-158, Ser-170, and Ser-175. The short motif at 165 to 170 (PLVTSS) is the CDC5-binding element. The span at 166 to 188 (LVTSSPIHMSPLQSRQRPVSSLQ) shows a compositional bias: polar residues. The CLB3-docking signature appears at 189 to 195 (PPKGPNF). Residues 200–202 (PKL) carry the CDC14-binding motif.

As to quaternary structure, interacts with CDC5 and CDC14. Post-translationally, phosphorylated by CLB3-CDK1 in metaphase which is required for correct localization at the nuclear envelop and the spindle pole body, and dephosphorylated by CDC14 in early anaphase.

The protein localises to the nucleus membrane. It localises to the cytoplasm. Its subcellular location is the cytoskeleton. It is found in the microtubule organizing center. The protein resides in the spindle pole body. Its function is as follows. Specialized component of the nuclear membrane that may be involved in the connection of the spindle pole body (SPB) to the nuclear envelope. Recruits CDC5 to spindle pole bodies in metaphase. In Saccharomyces cerevisiae (strain ATCC 204508 / S288c) (Baker's yeast), this protein is CDC5 pindle pole body anchor protein 1.